The sequence spans 491 residues: MLQGTGSDVGKSVLVAGLCRALVQRGLRVLPFKPQNMSNNAAVTSDGGEIGRAQALQAIACKVEPHTDMNPVLLKPQADRTSQLIVHGRVRGTLGAGNFRQARGALLGEVLASYNRLRRACDIVVVEGAGSPAEINLRAGDIANMGFARAAGVPVVLVGDIDRGGVIAAIVGTRTIIDPADTAMIQGFIINKFRGDPALFADGYAQIESLSGWRGFGVVPWLSAAARLPSEDAVVLESGKARAESRKLIACPILPRISNFDDLDPLKLEHGVDLHMVPPGQPIPAEAALIILPGSKSTIADLAALRAEGWDIDIFAHHRRGGLILGLCGGYQMLGKSIADPDGFEGSASAASGLGLLDVETTLHAHKALRPVSGLAMGAPFQGYEMHMGQTNGPDTEQPFAVFADGRRDGAINAGGTVFGSYVHGLLADAELRRALLSRMDVEAGGVDYGASVEAALDEIAAALEEHLDIDALVALAMAERPASVPAGDSA.

Positions 246 to 432 (RKLIACPILP…VHGLLADAEL (187 aa)) constitute a GATase cobBQ-type domain. The active-site Nucleophile is Cys328. Residue His424 is part of the active site.

This sequence belongs to the CobB/CobQ family. CobQ subfamily.

It functions in the pathway cofactor biosynthesis; adenosylcobalamin biosynthesis. Catalyzes amidations at positions B, D, E, and G on adenosylcobyrinic A,C-diamide. NH(2) groups are provided by glutamine, and one molecule of ATP is hydrogenolyzed for each amidation. This chain is Cobyric acid synthase, found in Novosphingobium aromaticivorans (strain ATCC 700278 / DSM 12444 / CCUG 56034 / CIP 105152 / NBRC 16084 / F199).